The following is a 765-amino-acid chain: Glycine--tRNA ligase (765 aa).

The transit peptide at 1–87 (MSLQLLKALP…LRSAAAEFIM (87 aa)) directs the protein to the mitochondrion. The tract at residues 41–73 (TTTKPTPSAPPPPPPTQPQQPAATTSWGTKKQN) is disordered. Residues 47-58 (PSAPPPPPPTQP) are compositionally biased toward pro residues. Residues 95–151 (QLAPLRERVQEQGNLVRDLKAKGAPEIDVKKAVAELKARKKLLEDKELALTPSVVSF) enclose the WHEP-TRS domain. Glu-331 contributes to the glycine binding site. ATP-binding positions include 363 to 365 (RNE) and 374 to 375 (RV). Glycine is bound at residue Glu-382. Residue 489–490 (EC) participates in ATP binding. 609 to 611 (EPS) provides a ligand contact to glycine. Arg-616 contributes to the ATP binding site.

This sequence belongs to the class-II aminoacyl-tRNA synthetase family. In terms of assembly, homodimer.

It is found in the mitochondrion. The protein localises to the cytoplasm. Its subcellular location is the cell projection. It localises to the axon. The enzyme catalyses 2 ATP + H(+) = P(1),P(4)-bis(5'-adenosyl) tetraphosphate + diphosphate. It carries out the reaction tRNA(Gly) + glycine + ATP = glycyl-tRNA(Gly) + AMP + diphosphate. Functionally, catalyzes the ATP-dependent ligation of glycine to the 3'-end of its cognate tRNA, via the formation of an aminoacyl-adenylate intermediate (Gly-AMP). Also produces diadenosine tetraphosphate (Ap4A), a universal pleiotropic signaling molecule needed for cell regulation pathways, by direct condensation of 2 ATPs. Thereby, may play a special role in Ap4A homeostasis. Required for terminal arborization of both dendrites and axons during development. The protein is Glycine--tRNA ligase of Drosophila melanogaster (Fruit fly).